Consider the following 428-residue polypeptide: Enolase (428 aa).

Gln-163 is a binding site for (2R)-2-phosphoglycerate. Glu-205 functions as the Proton donor in the catalytic mechanism. Asp-242, Glu-283, and Asp-310 together coordinate Mg(2+). Residues Lys-335, Arg-364, Ser-365, and Lys-386 each coordinate (2R)-2-phosphoglycerate. The active-site Proton acceptor is the Lys-335.

The protein belongs to the enolase family. Mg(2+) is required as a cofactor.

It localises to the cytoplasm. The protein localises to the secreted. Its subcellular location is the cell surface. It catalyses the reaction (2R)-2-phosphoglycerate = phosphoenolpyruvate + H2O. It participates in carbohydrate degradation; glycolysis; pyruvate from D-glyceraldehyde 3-phosphate: step 4/5. In terms of biological role, catalyzes the reversible conversion of 2-phosphoglycerate (2-PG) into phosphoenolpyruvate (PEP). It is essential for the degradation of carbohydrates via glycolysis. The chain is Enolase from Streptomyces avermitilis (strain ATCC 31267 / DSM 46492 / JCM 5070 / NBRC 14893 / NCIMB 12804 / NRRL 8165 / MA-4680).